The following is a 421-amino-acid chain: O-glycosyltransferase braB (421 aa).

The tract at residues 1–26 is disordered; that stretch reads MVPSVMEGAPQLGITSTDTSSAGVPP. Polar residues predominate over residues 13–22; the sequence is GITSTDTSSA.

It belongs to the afumC glycosyltransferase family.

Its pathway is secondary metabolite biosynthesis. Its function is as follows. O-glycosyltransferase; part of the gene cluster that mediates the biosynthesis of the brasilane terpene glycosides brasilane D and E. The biosynthesis starts with the activity of the terpene cyclase braA that converts farnesyl pyrophosphate into the sesquiterpene alcohol trichobrasilenol. Subsequently, trichobrasilenol is glycosylated by the O-glycosyltransferase braB putatively using UDP-GlcNAc as sugar donor to yield brasilane A. The latter then undergoes two rounds of oxidation performed by the cytochrome P450 monooxygenase braC. In the first round braC hydroxylates C-12 forming brasilane D, which serves as substrate in the second round to establish the epoxide at the bond between C-5 and C-10 and oxidize the alcohol at C-12 to an aldehyde leading to the final product brasilane E. BraB is also able to glycosylate geraniol, linalool, perillyl alcohol, 3,4-dichlorophenol and, to a lesser extend, benzyl alcohol. The sequence is that of O-glycosyltransferase braB from Annulohypoxylon truncatum (Hypoxylon truncatum).